The sequence spans 353 residues: MASGKMRIVVLFGGRSAEHDVSVLSATNVMNALDPAKYEAVPVFVTRAGQWLLSRFVNGALEKPSSGAELCLVPGGCGRAIVVPDAGAPYEADKIDIIFPVLHGLHGEDGAVQGLAQVARVPLAGCGIPGSANALDKDIAKRLVNEAGLSTAKSVTITREEVPAFSALEQALGLPIFIKPARQGSSVGVHKVVTEADYQAAMSDGFTYDDKLLAEEFIQAREVECGVLEDEGGALFVSRAGEIVPAESHCFYSYDAKYIDADGTEIKVPAELPEQVENEIRAIATRAFRVLGCDSMARVDFFVTADRRIVLNEINTIPGFTDMSMYSKVMAVSGVSYPEIINRLVAHGLARGS.

Residues 141-346 (KRLVNEAGLS…YPEIINRLVA (206 aa)) enclose the ATP-grasp domain. Residue 169-224 (EQALGLPIFIKPARQGSSVGVHKVVTEADYQAAMSDGFTYDDKLLAEEFIQAREVE) participates in ATP binding. 3 residues coordinate Mg(2+): aspartate 300, glutamate 313, and asparagine 315.

This sequence belongs to the D-alanine--D-alanine ligase family. Requires Mg(2+) as cofactor. The cofactor is Mn(2+).

The protein localises to the cytoplasm. The catalysed reaction is 2 D-alanine + ATP = D-alanyl-D-alanine + ADP + phosphate + H(+). It functions in the pathway cell wall biogenesis; peptidoglycan biosynthesis. In terms of biological role, cell wall formation. In Brucella suis biovar 1 (strain 1330), this protein is D-alanine--D-alanine ligase A.